The following is a 248-amino-acid chain: Ubiquinone/menaquinone biosynthesis C-methyltransferase UbiE (248 aa).

Ser-68 and Asp-92 together coordinate S-adenosyl-L-methionine.

It belongs to the class I-like SAM-binding methyltransferase superfamily. MenG/UbiE family.

The catalysed reaction is a 2-demethylmenaquinol + S-adenosyl-L-methionine = a menaquinol + S-adenosyl-L-homocysteine + H(+). The enzyme catalyses a 2-methoxy-6-(all-trans-polyprenyl)benzene-1,4-diol + S-adenosyl-L-methionine = a 5-methoxy-2-methyl-3-(all-trans-polyprenyl)benzene-1,4-diol + S-adenosyl-L-homocysteine + H(+). Its pathway is quinol/quinone metabolism; menaquinone biosynthesis; menaquinol from 1,4-dihydroxy-2-naphthoate: step 2/2. It participates in cofactor biosynthesis; ubiquinone biosynthesis. Its function is as follows. Methyltransferase required for the conversion of demethylmenaquinol (DMKH2) to menaquinol (MKH2) and the conversion of 2-polyprenyl-6-methoxy-1,4-benzoquinol (DDMQH2) to 2-polyprenyl-3-methyl-6-methoxy-1,4-benzoquinol (DMQH2). The polypeptide is Ubiquinone/menaquinone biosynthesis C-methyltransferase UbiE (Rickettsia conorii (strain ATCC VR-613 / Malish 7)).